A 60-amino-acid polypeptide reads, in one-letter code: Metallothionein B (60 aa).

The beta stretch occupies residues 1–28 (MDPCDCSKSGTCNCGGSCTCTNCSCTTC). 20 residues coordinate a divalent metal cation: C4, C6, C12, C14, C18, C20, C23, C25, C28, C32, C33, C35, C36, C40, C43, C47, C49, C54, C58, and C59. An alpha region spans residues 29 to 60 (KKSCCPCCPSGCTKCASGCVCKGKTCDTSCCQ).

Belongs to the metallothionein superfamily. Type 1 family.

In terms of biological role, metallothioneins have a high content of cysteine residues that bind various heavy metals. This chain is Metallothionein B (mtb), found in Dicentrarchus labrax (European seabass).